The sequence spans 300 residues: GTPase Era (300 aa).

An Era-type G domain is found at 6-173; it reads HSGFVAILGR…IESLVNTLPE (168 aa). The tract at residues 14–21 is G1; it reads GRPNVGKS. 14 to 21 provides a ligand contact to GTP; it reads GRPNVGKS. The tract at residues 40-44 is G2; the sequence is QTTRN. The G3 stretch occupies residues 61-64; that stretch reads DTPG. GTP is bound by residues 61 to 65 and 123 to 126; these read DTPGI and NKID. Positions 123–126 are G4; sequence NKID. The segment at 152–154 is G5; the sequence is ISA. In terms of domain architecture, KH type-2 spans 204-281; that stretch reads TREEVPHSVA…YLELWVKVQP (78 aa).

This sequence belongs to the TRAFAC class TrmE-Era-EngA-EngB-Septin-like GTPase superfamily. Era GTPase family. As to quaternary structure, monomer.

It localises to the cytoplasm. The protein localises to the cell membrane. Its function is as follows. An essential GTPase that binds both GDP and GTP, with rapid nucleotide exchange. Plays a role in 16S rRNA processing and 30S ribosomal subunit biogenesis and possibly also in cell cycle regulation and energy metabolism. This chain is GTPase Era, found in Ligilactobacillus salivarius (strain UCC118) (Lactobacillus salivarius).